A 63-amino-acid chain; its full sequence is Large ribosomal subunit protein uL29 (63 aa).

The protein belongs to the universal ribosomal protein uL29 family.

The polypeptide is Large ribosomal subunit protein uL29 (Chromohalobacter salexigens (strain ATCC BAA-138 / DSM 3043 / CIP 106854 / NCIMB 13768 / 1H11)).